The sequence spans 857 residues: Major vault protein (857 aa).

8 MVP repeats span residues 18–60, 62–122, 123–174, 175–227, 228–282, 284–332, 333–387, and 388–441; these read PYYY…ITIP, RHYC…KVVQ, ANAA…TIIR, PNQA…YVLT, EKNA…NTLT, RQYC…FILG, EDEG…IPLD, and ENEG…VAER. The interval 434–453 is disordered; it reads AKDPVAERSDRRGDRAAPRA. Residues 437 to 453 show a composition bias toward basic and acidic residues; the sequence is PVAERSDRRGDRAAPRA. The IQ domain occupies 665–694; that stretch reads ARHEAERLEQEARGRLERQKIMDEAEAEKS.

The vault ribonucleoprotein particle is a huge (400 A x 670 A) cage structure of 12.9 MDa. It consists of a dimer of half-vaults, with each half-vault comprising 39 identical major vault protein (MVP) chains, PARP4 and one or more vault RNAs (vRNAs). As to expression, expressed in embryos, tube feet and coelomocytes (at protein level). Not expressed in sperm cells (at protein level).

Its subcellular location is the cytoplasm. It is found in the nucleus. Functionally, required for normal vault structure. Vaults are multi-subunit structures that may act as scaffolds for proteins involved in signal transduction. Vaults may also play a role in nucleo-cytoplasmic transport. This is Major vault protein from Strongylocentrotus purpuratus (Purple sea urchin).